The following is a 186-amino-acid chain: Secreted chorismate mutase (186 aa).

The signal sequence occupies residues 1-30 (MQPTHTLTRLTVIGKLIIASSFFLSLAVQA). The Chorismate mutase domain maps to 31 to 107 (QQCGQTAPLI…AAKAIQYRYR (77 aa)). C33 and C148 are disulfide-bonded. Residues R43, K54, D63, 99–103 (AKAIQ), and R127 contribute to the substrate site.

In terms of assembly, homodimer.

Its subcellular location is the periplasm. The catalysed reaction is chorismate = prephenate. It participates in metabolic intermediate biosynthesis; prephenate biosynthesis; prephenate from chorismate: step 1/1. Functionally, catalyzes the Claisen rearrangement of chorismate to prephenate. May play some role in the pathogenicity. The protein is Secreted chorismate mutase (pheA2) of Yersinia pestis.